The following is a 408-amino-acid chain: tRNA(Ile)-lysidine synthase (408 aa).

27-32 (SGGGDS) contacts ATP.

The protein belongs to the tRNA(Ile)-lysidine synthase family.

The protein localises to the cytoplasm. It carries out the reaction cytidine(34) in tRNA(Ile2) + L-lysine + ATP = lysidine(34) in tRNA(Ile2) + AMP + diphosphate + H(+). Ligates lysine onto the cytidine present at position 34 of the AUA codon-specific tRNA(Ile) that contains the anticodon CAU, in an ATP-dependent manner. Cytidine is converted to lysidine, thus changing the amino acid specificity of the tRNA from methionine to isoleucine. The chain is tRNA(Ile)-lysidine synthase from Caulobacter vibrioides (strain ATCC 19089 / CIP 103742 / CB 15) (Caulobacter crescentus).